The following is a 304-amino-acid chain: Quinolinate synthase 1 (304 aa).

Residues His24 and Ser41 each contribute to the iminosuccinate site. A [4Fe-4S] cluster-binding site is contributed by Cys86. Iminosuccinate-binding positions include 112-114 (YVN) and Ser129. Cys171 is a [4Fe-4S] cluster binding site. Iminosuccinate contacts are provided by residues 197–199 (HPE) and Thr214. Cys259 lines the [4Fe-4S] cluster pocket.

It belongs to the quinolinate synthase family. Type 2 subfamily. [4Fe-4S] cluster serves as cofactor.

The protein localises to the cytoplasm. The enzyme catalyses iminosuccinate + dihydroxyacetone phosphate = quinolinate + phosphate + 2 H2O + H(+). It participates in cofactor biosynthesis; NAD(+) biosynthesis; quinolinate from iminoaspartate: step 1/1. Catalyzes the condensation of iminoaspartate with dihydroxyacetone phosphate to form quinolinate. The chain is Quinolinate synthase 1 from Methanosarcina acetivorans (strain ATCC 35395 / DSM 2834 / JCM 12185 / C2A).